Consider the following 307-residue polypeptide: Putative oxidoreductase YceM (307 aa).

This sequence belongs to the Gfo/Idh/MocA family.

This is Putative oxidoreductase YceM (yceM) from Escherichia coli (strain K12).